Consider the following 2315-residue polypeptide: Receptor-type tyrosine-protein phosphatase zeta (2315 aa).

The first 24 residues, 1–24, serve as a signal peptide directing secretion; sequence MRILKRFLACIQLLCVCRLDWANG. The Extracellular segment spans residues 25-1636; the sequence is YYRQQRKLVE…LAEGLESEKK (1612 aa). Positions 36–300 constitute an Alpha-carbonic anhydrase domain; that stretch reads IGWSYTGALN…KFSRQVFSSY (265 aa). Cystine bridges form between C56–C240 and C133–C264. N105, N134, N223, N232, N324, and N381 each carry an N-linked (GlcNAc...) asparagine glycan. One can recognise a Fibronectin type-III domain in the interval 314–413; that stretch reads EPENVQADPE…LIVDMPTDNP (100 aa). Disordered stretches follow at residues 442 to 462 and 477 to 507; these read IVNPGRDSATNQIRKKEPQIS and AKTNRSPTRGSEFSGKGDVPNTSLNSTSQPV. The span at 496–507 shows a compositional bias: polar residues; the sequence is PNTSLNSTSQPV. N-linked (GlcNAc...) asparagine glycans are attached at residues N497, N501, and N552. S587 is a glycosylation site (O-linked (Xyl...) (chondroitin sulfate) serine). N-linked (GlcNAc...) asparagine glycans are attached at residues N602 and N629. Positions 628–650 are disordered; that stretch reads RNASEDSTSSGSEESLKDPSMEG. A Phosphoserine; alternate modification is found at S637. An O-linked (Xyl...) (chondroitin sulfate) serine; alternate glycan is attached at S637. At S639 the chain carries Phosphoserine. N677 carries N-linked (GlcNAc...) asparagine glycosylation. O-linked (Xyl...) (chondroitin sulfate) serine glycosylation is present at S997. Residues N1017, N1050, N1082, and N1122 are each glycosylated (N-linked (GlcNAc...) asparagine). The span at 1123 to 1138 shows a compositional bias: polar residues; it reads FSVQPTHTVSQASGDT. 4 disordered regions span residues 1123 to 1160, 1397 to 1523, 1543 to 1572, and 1584 to 1621; these read FSVQPTHTVSQASGDTSLKPVLSANSEPASSDPASSEM, KATS…EEND, LTSDEESGSGQGTSDSLNENETSTDFSFAD, and AGDSEITPGFPQSPTSSVTSENSEVFHVSEAEASNSSH. The segment covering 1145 to 1159 has biased composition (low complexity); the sequence is SANSEPASSDPASSE. Positions 1417–1432 are enriched in acidic residues; it reads EDGDTDDDGDDDDDDR. The span at 1450 to 1465 shows a compositional bias: basic and acidic residues; it reads ESQEKVMNDSDTHENS. N1457 carries N-linked (GlcNAc...) asparagine glycosylation. Polar residues-rich tracts occupy residues 1466–1479 and 1487–1513; these read LMDQNNPISYSLSE and VTSVSSDSQTGMDRSPGKSPSANGLSQ. O-linked (Xyl...) (chondroitin sulfate) serine glycans are attached at residues S1549 and S1551. Polar residues-rich tracts occupy residues 1554–1572 and 1593–1606; these read GTSDSLNENETSTDFSFAD and FPQSPTSSVTSENS. A glycan (N-linked (GlcNAc...) asparagine) is linked at N1562. N1618 is a glycosylation site (N-linked (GlcNAc...) asparagine). A helical membrane pass occupies residues 1637–1662; it reads AVIPLVIVSALTFICLVVLVGILIYW. Topologically, residues 1663–2315 are cytoplasmic; it reads RKCFQTAHFY…NIAESLESLV (653 aa). Phosphothreonine is present on residues T1684 and T1687. Tyrosine-protein phosphatase domains are found at residues 1717 to 1992 and 2023 to 2282; these read FTEE…LVEA and LEKQ…ILSL. Residues D1901, 1933-1939, and Q1977 each bind substrate; that span reads CSAGVGR. The active-site Phosphocysteine intermediate is the C1933. The residue at position 2055 (S2055) is a Phosphoserine.

The protein belongs to the protein-tyrosine phosphatase family. Receptor class 5 subfamily. The carbonic-anhydrase like domain interacts with CNTN1 (contactin). Interacts with PTN. Interaction with PTN promotes formation of homooligomers; oligomerization impairs phosphatase activity. Interacts (via chondroitin sulfate chains) with MDK (via C-terminal); this interaction is inhibited by PTN; this interaction promotes neuronal migration. As to expression, specifically expressed in the central nervous system, where it is localized in the Purkinje cell layer of the cerebellum, the dentate gyrus, and the subependymal layer of the anterior horn of the lateral ventricle. Developmentally regulated in the brain.

The protein resides in the cell membrane. It localises to the secreted. It catalyses the reaction O-phospho-L-tyrosyl-[protein] + H2O = L-tyrosyl-[protein] + phosphate. In terms of biological role, protein tyrosine phosphatase that negatively regulates oligodendrocyte precursor proliferation in the embryonic spinal cord. Required for normal differentiation of the precursor cells into mature, fully myelinating oligodendrocytes. May play a role in protecting oligondendrocytes against apoptosis. May play a role in the establishment of contextual memory, probably via the dephosphorylation of proteins that are part of important signaling cascades. This Homo sapiens (Human) protein is Receptor-type tyrosine-protein phosphatase zeta (PTPRZ1).